The chain runs to 224 residues: A-type ATP synthase subunit D (224 aa).

A compositionally biased stretch (basic and acidic residues) spans 200-209; the sequence is KKVKDKKEAQ. The tract at residues 200–224 is disordered; sequence KKVKDKKEAQEEAADEAAAAESTGA. Residues 215–224 are compositionally biased toward low complexity; sequence EAAAAESTGA.

This sequence belongs to the V-ATPase D subunit family. In terms of assembly, has multiple subunits with at least A(3), B(3), C, D, E, F, H, I and proteolipid K(x).

It is found in the cell membrane. Its function is as follows. Component of the A-type ATP synthase that produces ATP from ADP in the presence of a proton gradient across the membrane. The chain is A-type ATP synthase subunit D from Halobacterium salinarum (strain ATCC 29341 / DSM 671 / R1).